We begin with the raw amino-acid sequence, 404 residues long: Cysteine desulfurase IscS (404 aa).

Residues 75–76, Asn155, Gln183, and 203–205 each bind pyridoxal 5'-phosphate; these read AT and SAH. Lys206 carries the N6-(pyridoxal phosphate)lysine modification. Thr243 is a binding site for pyridoxal 5'-phosphate. Cys328 acts as the Cysteine persulfide intermediate in catalysis. Residue Cys328 participates in [2Fe-2S] cluster binding.

It belongs to the class-V pyridoxal-phosphate-dependent aminotransferase family. NifS/IscS subfamily. Homodimer. Forms a heterotetramer with IscU, interacts with other sulfur acceptors. It depends on pyridoxal 5'-phosphate as a cofactor.

Its subcellular location is the cytoplasm. It catalyses the reaction (sulfur carrier)-H + L-cysteine = (sulfur carrier)-SH + L-alanine. The protein operates within cofactor biosynthesis; iron-sulfur cluster biosynthesis. Its function is as follows. Master enzyme that delivers sulfur to a number of partners involved in Fe-S cluster assembly, tRNA modification or cofactor biosynthesis. Catalyzes the removal of elemental sulfur atoms from cysteine to produce alanine. Functions as a sulfur delivery protein for Fe-S cluster synthesis onto IscU, an Fe-S scaffold assembly protein, as well as other S acceptor proteins. In Vibrio atlanticus (strain LGP32) (Vibrio splendidus (strain Mel32)), this protein is Cysteine desulfurase IscS.